Reading from the N-terminus, the 326-residue chain is Virulence factor CaO19.6688 (326 aa).

Disordered stretches follow at residues 19–91 (FNSL…KLPS), 112–137 (EEDN…GTTK), 161–184 (NTTI…PSFP), 222–245 (NVGQ…NDLL), and 276–326 (YEYG…PKIK). 3 stretches are compositionally biased toward low complexity: residues 21–42 (SLKS…SSSS), 53–78 (NRNT…NTTP), and 117–137 (EQQL…GTTK).

In terms of biological role, virulence factor involved in pathogen-host interaction. Modulates host pro-inflammatory cytokine interleukin-1 beta (IL1B) expression. This chain is Virulence factor CaO19.6688, found in Candida albicans (strain SC5314 / ATCC MYA-2876) (Yeast).